A 363-amino-acid chain; its full sequence is 3-dehydroquinate synthase (363 aa).

Residues 72-77 (SGEKEK), 130-131 (TT), Lys-142, and Lys-151 each bind NAD(+). The Zn(2+) site is built by Glu-184, His-247, and His-264.

The protein belongs to the sugar phosphate cyclases superfamily. Dehydroquinate synthase family. Requires Co(2+) as cofactor. The cofactor is Zn(2+). It depends on NAD(+) as a cofactor.

The protein localises to the cytoplasm. It carries out the reaction 7-phospho-2-dehydro-3-deoxy-D-arabino-heptonate = 3-dehydroquinate + phosphate. It functions in the pathway metabolic intermediate biosynthesis; chorismate biosynthesis; chorismate from D-erythrose 4-phosphate and phosphoenolpyruvate: step 2/7. Functionally, catalyzes the conversion of 3-deoxy-D-arabino-heptulosonate 7-phosphate (DAHP) to dehydroquinate (DHQ). The chain is 3-dehydroquinate synthase from Bacillus thuringiensis (strain Al Hakam).